A 66-amino-acid chain; its full sequence is Large ribosomal subunit protein bL35 (66 aa).

Belongs to the bacterial ribosomal protein bL35 family.

The protein is Large ribosomal subunit protein bL35 of Parvibaculum lavamentivorans (strain DS-1 / DSM 13023 / NCIMB 13966).